A 1139-amino-acid chain; its full sequence is MRECIISWTLLLCLSCVKSFNLDVNAPIYRYGPSGTNFGYSVAEHFKGDKPVMLIGAPRGESGQTGTERAGAMYACDINTFYNGGSNHWCEQVRFEYENVEDYAKRPNETRGRTVHPLGKNDQLLASTIVSKGTKNGSALVCAPLIRYHQTAAYPQGACYELESNLRLQSTYATCAQKNLPTTDRHNEYGGCMEGFSAAITQDTIVTGLIGAVKWTGGVFAKKSSANIFDSVVEKYTMNQPNGDMIRTRLVAHDYLGYSVDIGRFGFWYEDGKPITVVSGATRYGEHGAVIFLPFIQDSSSKLTLNEDKFIINGTAMGSAFGYSIEVVDLNGDGFDDLIVGAPFEHRSGIDGNFGGIVYVYFSQGVQRKQHESHLVFHPPKILKNPDFYSQFGLSITKLGNVDGDKSKLNDFAVGAPFAFDGAGAVYIYLGTKNIEKFRKKPAQVIKGNDLPNLPPGGMRSFGFSLSGGSDMDENGYPDLLIGSPSKNFVALLRSRPVISIETKHKMEKRMVDIDKGVNCPRGAKTCFPLDMVIYVDEETKRGAELVDFSSDVFMCNLEAIPFRADTTARGFIEGSHSHNYSWPCGSNSHVQKRTYRQLIYLPVQESKDWITPLKFRFTVSIRNEKKPVQPPQGSQLVDLKHYPVLNKYGASYEFDVPFNTLCGEDHTCQTDLSLKAAFKDIPLTSNGYVSNVGEKDYLDLTFTVENKKEKAYQANFYLEYNEEELELPQVQGSKRMIAETIGKNIVHLPLGNPMNGASKHQFTIQFKLTRGRTEGIGKALKFMAHVNSTSQETEEELKDNKWEAEVQIIKKAELEIYGISDPDRVFFGGKARAESELELEEDIGTMVRHNYTIINHGPWTVRNVEAHISWPYQLRSRFGRGKNALYLLDVPTITTEFTDGTSEVRKCFIKQQYEYVNPAEIKLNTKYSTQETAPHRVEHRMKREIDEDEEEQSDDLGAVEENIPWFSTANFWNLFAIKGGDGRPREVKHLSCQDNTANCFTVICHFDFIDANSAVVIDLRARLWNATFIEDYSDVESVKIRSFGKLQLDESQGIDDDPNNNAAFVETSADPDRPTIGDSRPIPWWIYVIAAVIGVLILSLIIICLSKCGFFKRNRLDQPSLYTAQLKHEREEWADTGL.

Positions 1–19 (MRECIISWTLLLCLSCVKS) are cleaved as a signal peptide. Topologically, residues 20-1084 (FNLDVNAPIY…PTIGDSRPIP (1065 aa)) are extracellular. One copy of the FG-GAP 1 repeat lies at 21–85 (NLDVNAPIYR…CDINTFYNGG (65 aa)). N-linked (GlcNAc...) asparagine glycosylation is found at N108 and N136. FG-GAP repeat units lie at residues 111–171 (RGRT…LQST), 180–231 (LPTT…IFDS), 242–302 (NGDM…SSSK), 307–370 (EDKF…QRKQ), 378–438 (HPPK…IEKF), and 448–510 (GNDL…MEKR). N313 is a glycosylation site (N-linked (GlcNAc...) asparagine). N-linked (GlcNAc...) asparagine glycosylation is found at N580, N788, N851, and N1026. The helical transmembrane segment at 1085-1106 (WWIYVIAAVIGVLILSLIIICL) threads the bilayer. Residues 1107–1139 (SKCGFFKRNRLDQPSLYTAQLKHEREEWADTGL) are Cytoplasmic-facing.

This sequence belongs to the integrin alpha chain family. Heterodimer of an alpha and a beta subunit. Alpha ina-1 associates with beta pat-3. Interacts (via cytoplasmic domain) with src-1 (when phosphorylated at 'Tyr-416').

It localises to the membrane. It is found in the cell projection. The protein resides in the phagocytic cup. The protein localises to the cytoplasmic vesicle. Its subcellular location is the phagosome membrane. Its function is as follows. Plays a role in cell migration, axon fasciculation, and morphogenesis. During gonad morphogenesis, involved in distal tip cell (DTC)-mediated guidance of gonad elongation, in maintaining their sharp tapering morphology and in their migration. Involved in the anterior-posterior positioning of QR neuroblast descendants by regulating the migratory speed of QR.p. Probably by acting as a receptor for apoptotic cells, plays a role in the clearance of apoptotic cells during mid-embryogenesis. This Caenorhabditis elegans protein is Integrin alpha ina-1 (ina-1).